The sequence spans 390 residues: Succinyl-diaminopimelate desuccinylase 1 (390 aa).

His76 contributes to the Zn(2+) binding site. Asp78 is an active-site residue. Residue Asp109 coordinates Zn(2+). Glu143 acts as the Proton acceptor in catalysis. The Zn(2+) site is built by Glu144, Glu172, and His363.

Belongs to the peptidase M20A family. DapE subfamily. In terms of assembly, homodimer. Zn(2+) serves as cofactor. Co(2+) is required as a cofactor.

It catalyses the reaction N-succinyl-(2S,6S)-2,6-diaminopimelate + H2O = (2S,6S)-2,6-diaminopimelate + succinate. It participates in amino-acid biosynthesis; L-lysine biosynthesis via DAP pathway; LL-2,6-diaminopimelate from (S)-tetrahydrodipicolinate (succinylase route): step 3/3. In terms of biological role, catalyzes the hydrolysis of N-succinyl-L,L-diaminopimelic acid (SDAP), forming succinate and LL-2,6-diaminopimelate (DAP), an intermediate involved in the bacterial biosynthesis of lysine and meso-diaminopimelic acid, an essential component of bacterial cell walls. This is Succinyl-diaminopimelate desuccinylase 1 from Alteromonas mediterranea (strain DSM 17117 / CIP 110805 / LMG 28347 / Deep ecotype).